Reading from the N-terminus, the 796-residue chain is Molybdenum cofactor sulfurase (796 aa).

At Lys246 the chain carries N6-(pyridoxal phosphate)lysine. Cys418 is an active-site residue. The MOSC domain maps to 650–796; the sequence is LRLLRQSSQR…LTCGDVVVVT (147 aa). At Ser752 the chain carries Phosphoserine.

This sequence belongs to the class-V pyridoxal-phosphate-dependent aminotransferase family. MOCOS subfamily. Pyridoxal 5'-phosphate is required as a cofactor.

It carries out the reaction Mo-molybdopterin + L-cysteine + AH2 = thio-Mo-molybdopterin + L-alanine + A + H2O. Sulfurates the molybdenum cofactor. Sulfation of molybdenum is essential for xanthine dehydrogenase (XDH) and aldehyde oxidase (ADO) enzymes in which molybdenum cofactor is liganded by 1 oxygen and 1 sulfur atom in active form. The polypeptide is Molybdenum cofactor sulfurase (Drosophila persimilis (Fruit fly)).